A 501-amino-acid polypeptide reads, in one-letter code: Endoglucanase 8 (501 aa).

The signal sequence occupies residues 1 to 35 (MKPRSSRDGHNAAAAAALLLAALVLSGDVLPAVVA). Aspartate 95 functions as the Nucleophile in the catalytic mechanism. Asparagine 298 is a glycosylation site (N-linked (GlcNAc...) asparagine). The active site involves histidine 414. A glycan (N-linked (GlcNAc...) asparagine) is linked at asparagine 462. Residue aspartate 465 is part of the active site. An N-linked (GlcNAc...) asparagine glycan is attached at asparagine 469. Glutamate 474 is a catalytic residue.

Belongs to the glycosyl hydrolase 9 (cellulase E) family.

It localises to the secreted. It catalyses the reaction Endohydrolysis of (1-&gt;4)-beta-D-glucosidic linkages in cellulose, lichenin and cereal beta-D-glucans.. The sequence is that of Endoglucanase 8 from Oryza sativa subsp. japonica (Rice).